The sequence spans 365 residues: GTPase Obg (365 aa).

One can recognise an Obg domain in the interval Met-1–Leu-159. Positions Ala-160–Ala-334 constitute an OBG-type G domain. GTP-binding positions include Gly-166–Ser-173, Phe-191–His-195, Asp-213–Gly-216, Asn-284–Asp-287, and Ser-315–Leu-317. Mg(2+) is bound by residues Ser-173 and Thr-193.

It belongs to the TRAFAC class OBG-HflX-like GTPase superfamily. OBG GTPase family. Monomer. The cofactor is Mg(2+).

It is found in the cytoplasm. An essential GTPase which binds GTP, GDP and possibly (p)ppGpp with moderate affinity, with high nucleotide exchange rates and a fairly low GTP hydrolysis rate. Plays a role in control of the cell cycle, stress response, ribosome biogenesis and in those bacteria that undergo differentiation, in morphogenesis control. The protein is GTPase Obg of Cupriavidus metallidurans (strain ATCC 43123 / DSM 2839 / NBRC 102507 / CH34) (Ralstonia metallidurans).